Reading from the N-terminus, the 129-residue chain is Glycine cleavage system H protein (129 aa).

The 83-residue stretch at Thr-24–Lys-106 folds into the Lipoyl-binding domain. Lys-65 bears the N6-lipoyllysine mark.

The protein belongs to the GcvH family. The glycine cleavage system is composed of four proteins: P, T, L and H. Requires (R)-lipoate as cofactor.

The glycine cleavage system catalyzes the degradation of glycine. The H protein shuttles the methylamine group of glycine from the P protein to the T protein. The polypeptide is Glycine cleavage system H protein (Idiomarina loihiensis (strain ATCC BAA-735 / DSM 15497 / L2-TR)).